Consider the following 270-residue polypeptide: Fluoride-specific ion channel FluC 2 (270 aa).

4 consecutive transmembrane segments (helical) span residues 4-24, 35-55, 67-87, and 96-116; these read IIIL…FIML, LDIL…TALY, IIGT…YGSV, and AFLI…VAVL. Na(+)-binding residues include glycine 74 and serine 77.

It belongs to the fluoride channel Fluc/FEX (TC 1.A.43) family.

The protein localises to the cell inner membrane. It catalyses the reaction fluoride(in) = fluoride(out). With respect to regulation, na(+) is not transported, but it plays an essential structural role and its presence is essential for fluoride channel function. Its function is as follows. Fluoride-specific ion channel. Important for reducing fluoride concentration in the cell, thus reducing its toxicity. The protein is Fluoride-specific ion channel FluC 2 of Brucella melitensis biotype 1 (strain ATCC 23456 / CCUG 17765 / NCTC 10094 / 16M).